Reading from the N-terminus, the 331-residue chain is Tetraacyldisaccharide 4'-kinase (331 aa).

Residue 57–64 (SVGGNGKT) participates in ATP binding.

It belongs to the LpxK family.

It carries out the reaction a lipid A disaccharide + ATP = a lipid IVA + ADP + H(+). The protein operates within glycolipid biosynthesis; lipid IV(A) biosynthesis; lipid IV(A) from (3R)-3-hydroxytetradecanoyl-[acyl-carrier-protein] and UDP-N-acetyl-alpha-D-glucosamine: step 6/6. Transfers the gamma-phosphate of ATP to the 4'-position of a tetraacyldisaccharide 1-phosphate intermediate (termed DS-1-P) to form tetraacyldisaccharide 1,4'-bis-phosphate (lipid IVA). This is Tetraacyldisaccharide 4'-kinase from Histophilus somni (strain 2336) (Haemophilus somnus).